The primary structure comprises 172 residues: Interferon tau-3 (172 aa).

Disulfide bonds link C1–C99 and C29–C139.

Belongs to the alpha/beta interferon family. IFN-alphaII subfamily. Constitutively and exclusively expressed in the mononuclear cells of the extraembryonic trophectoderm.

It is found in the secreted. In terms of biological role, paracrine hormone primarily responsible for maternal recognition of pregnancy. Interacts with endometrial receptors, probably type I interferon receptors, and blocks estrogen receptor expression, preventing the estrogen-induced increase in oxytocin receptor expression in the endometrium. This results in the suppression of the pulsatile endometrial release of the luteolytic hormone prostaglandin F2-alpha, hindering the regression of the corpus luteum (luteolysis) and therefore a return to ovarian cyclicity. This, and a possible direct effect of IFN-tau on prostaglandin synthesis, leads in turn to continued ovarian progesterone secretion, which stimulates the secretion by the endometrium of the nutrients required for the growth of the conceptus. In summary, displays particularly high antiviral and antiproliferative potency concurrently with particular weak cytotoxicity, high antiluteolytic activity and immunomodulatory properties. In contrast with other IFNs, IFN-tau is not virally inducible. The sequence is that of Interferon tau-3 (IFNT3) from Ovis aries (Sheep).